A 411-amino-acid chain; its full sequence is Protein-lysine 6-oxidase (411 aa).

An N-terminal signal peptide occupies residues 1–21; the sequence is MRFAWTVLFLGQLQFCPLLRC. Positions 22–162 are cleaved as a propeptide — removed by BMP1; the sequence is APQAPREPPA…PPSHVDRMVG (141 aa). A disordered region spans residues 60–168; the sequence is PQRRRDSSAT…RMVGDDPYNP (109 aa). 2 N-linked (GlcNAc...) asparagine glycosylation sites follow: Asn-91 and Asn-138. At Tyr-181 the chain carries Sulfotyrosine. The tract at residues 207–411 is lysyl-oxidase like; the sequence is PDLVPDPYYI…YASGCTISPY (205 aa). 5 cysteine pairs are disulfide-bonded: Cys-232–Cys-238, Cys-285–Cys-334, Cys-318–Cys-324, Cys-345–Cys-355, and Cys-392–Cys-406. His-286, His-288, and His-290 together coordinate Cu cation. Residues 314 to 349 constitute a cross-link (lysine tyrosylquinone (Lys-Tyr)); it reads KASFCLEDTSCDYGYHRRFACTAHTQGLSPGCYDTY. Tyr-349 bears the 2',4',5'-topaquinone mark.

Belongs to the lysyl oxidase family. Interacts with MFAP4. Interacts (via propeptide) with EFEMP2; this interaction is strong and facilitates formation of ternary complexes with ELN during elastic fiber assembly; this interaction limits interaction of EFEMP2 with FBLN5. Cu cation is required as a cofactor. It depends on lysine tyrosylquinone residue as a cofactor. In terms of processing, the lysine tyrosylquinone cross-link (LTQ) is generated by condensation of the epsilon-amino group of a lysine with a topaquinone produced by oxidation of tyrosine. Post-translationally, proteolytically cleaved by BMP1 which removes the propeptide. Also proteolytically cleaved by ADAMTS2 and ADAMTS14, but not by ADAMTS3, at an additional cleavage site downstream of the BMP1 cleavage site. The propeptide plays a role in directing the deposition of this enzyme to elastic fibers, via interaction with tropoelastin. Cleavage by BMP1 to remove the propeptide does not increase enzymatic activity but increases binding to collagen. Cleavage by ADAMTS2 produces a form with reduced collagen-binding activity. Sulfated at Tyr-181 and also at either Tyr-177 or Tyr-178 which enhances binding to collagen. In terms of tissue distribution, aorta and lung.

The protein resides in the secreted. Its subcellular location is the extracellular space. It catalyses the reaction L-lysyl-[protein] + O2 + H2O = (S)-2-amino-6-oxohexanoyl-[protein] + H2O2 + NH4(+). Its function is as follows. Responsible for the post-translational oxidative deamination of peptidyl lysine residues in precursors to fibrous collagen and elastin. Regulator of Ras expression. May play a role in tumor suppression. Plays a role in the aortic wall architecture. This is Protein-lysine 6-oxidase from Rattus norvegicus (Rat).